A 1222-amino-acid polypeptide reads, in one-letter code: ATP-dependent helicase/nuclease subunit A (1222 aa).

One can recognise a UvrD-like helicase ATP-binding domain in the interval 27 to 483 (HLQENERCRD…RDYQKKPEQG (457 aa)). 48-55 (AIYTSGQN) contributes to the ATP binding site. The region spanning 512-798 (ESVGDVLYDE…ADVEVATPKQ (287 aa)) is the UvrD-like helicase C-terminal domain.

The protein belongs to the helicase family. AddA subfamily. In terms of assembly, heterodimer of AddA and AddB/RexB. Requires Mg(2+) as cofactor.

The catalysed reaction is Couples ATP hydrolysis with the unwinding of duplex DNA by translocating in the 3'-5' direction.. The enzyme catalyses ATP + H2O = ADP + phosphate + H(+). Its function is as follows. The heterodimer acts as both an ATP-dependent DNA helicase and an ATP-dependent, dual-direction single-stranded exonuclease. Recognizes the chi site generating a DNA molecule suitable for the initiation of homologous recombination. The AddA nuclease domain is required for chi fragment generation; this subunit has the helicase and 3' -&gt; 5' nuclease activities. This chain is ATP-dependent helicase/nuclease subunit A, found in Streptococcus pyogenes serotype M1.